Consider the following 75-residue polypeptide: Putative primary metabolism protein HVA1 (75 aa).

Residues 1-13 show a composition bias toward polar residues; it reads MSVQDKQGQNINV. 2 disordered regions span residues 1–24 and 40–75; these read MSVQ…YRGG and AAEK…DKQK.

Functionally, may play a role in primary metabolism. This is Putative primary metabolism protein HVA1 from Cryptococcus neoformans var. grubii serotype A (strain H99 / ATCC 208821 / CBS 10515 / FGSC 9487) (Filobasidiella neoformans var. grubii).